A 531-amino-acid polypeptide reads, in one-letter code: Plant UBX domain-containing protein 11 (531 aa).

Met-1 carries the N-acetylmethionine modification. Low complexity predominate over residues 160 to 173 (AVASPSTASSVQPS). 2 disordered regions span residues 160 to 316 (AVAS…KASD) and 441 to 531 (ANAS…NDRR). Composition is skewed to polar residues over residues 174–190 (ETKS…NNDG) and 201–214 (EPSN…NQPA). A compositionally biased stretch (basic and acidic residues) spans 290-301 (VDTKETMKPKDE). In terms of domain architecture, UBX spans 312–390 (KKASDVHLNI…RLFDRQALVV (79 aa)). 2 stretches are compositionally biased toward polar residues: residues 441-478 (ANAS…GRSN) and 486-496 (TSRIGSNIHTL).

As to quaternary structure, interacts with CDC48A.

This Arabidopsis thaliana (Mouse-ear cress) protein is Plant UBX domain-containing protein 11.